We begin with the raw amino-acid sequence, 254 residues long: Protein GVQW3 (254 aa).

This chain is Protein GVQW3, found in Homo sapiens (Human).